A 244-amino-acid chain; its full sequence is 5-oxoprolinase subunit A (244 aa).

It belongs to the LamB/PxpA family. As to quaternary structure, forms a complex composed of PxpA, PxpB and PxpC.

The enzyme catalyses 5-oxo-L-proline + ATP + 2 H2O = L-glutamate + ADP + phosphate + H(+). Functionally, catalyzes the cleavage of 5-oxoproline to form L-glutamate coupled to the hydrolysis of ATP to ADP and inorganic phosphate. The chain is 5-oxoprolinase subunit A from Salmonella newport (strain SL254).